We begin with the raw amino-acid sequence, 105 residues long: UPF0145 protein CPS_2458 (105 aa).

Belongs to the UPF0145 family.

The protein is UPF0145 protein CPS_2458 of Colwellia psychrerythraea (strain 34H / ATCC BAA-681) (Vibrio psychroerythus).